We begin with the raw amino-acid sequence, 622 residues long: WD repeat-containing protein 70 (622 aa).

A compositionally biased stretch (basic and acidic residues) spans 36-55 (RTAVERSKQTLEAREKEEQL). The tract at residues 36–141 (RTAVERSKQT…DNPVKDIPDS (106 aa)) is disordered. Positions 67–84 (SSSGQKKTKASGSSSGSE) are enriched in low complexity. Over residues 120-132 (SDDEDDEEHEDDD) the composition is skewed to acidic residues. WD repeat units follow at residues 148–187 (HGTKTVSALGLDPSGARLVTGGYDYDVRFWDFAGMDASLQ), 195–236 (CECH…ECVK), 249–289 (GHTA…KHKG), 298–337 (GKPVIPTCCTYSRDGKFIAAGCQDGSIQIWDRNMSVHTKF), 344–383 (TPGTDTSCVTFSYGGNVLATRGGDDTLKTWDIRKFKNPLN), 387–434 (GLEN…KIYE), and 437–476 (VTEASVVRCLWHPKLNQIMVGTGNGLAKVYYDPNRSQRGA). Over residues 508–533 (REPRQRSTRKQLEKDRLDPVKSHKPE) the composition is skewed to basic and acidic residues. Disordered stretches follow at residues 508-549 (REPR…GTHG) and 602-622 (AEVDSDEEEPDNEPEWKKRKI). Residues 539-549 (PGRGGRVGTHG) are compositionally biased toward gly residues. A compositionally biased stretch (acidic residues) spans 604-614 (VDSDEEEPDNE).

The protein belongs to the WD repeat GAD-1 family.

This chain is WD repeat-containing protein 70 (wdr70), found in Xenopus laevis (African clawed frog).